The sequence spans 346 residues: UPF0065 protein in the TAR-I ttuE-ttuC' intergenic region (346 aa).

Positions 1 to 46 (MQASMLDSQWRLTIFSPRRKVKVSQMNSRFIAVLLTATILPWVAQA) are cleaved as a signal peptide.

It belongs to the UPF0065 (bug) family.

Its subcellular location is the periplasm. The sequence is that of UPF0065 protein in the TAR-I ttuE-ttuC' intergenic region from Agrobacterium vitis (Rhizobium vitis).